We begin with the raw amino-acid sequence, 83 residues long: Ferredoxin (83 aa).

4Fe-4S ferredoxin-type domains are found at residues 2–29 (ALMITDECINCDVCEPECPNGAISQGDE) and 31–64 (YVIEPSLCTECVGHYETSQCVEVCPVDCIIKDPS). Residues Cys9, Cys12, Cys15, Cys19, Cys38, Cys41, Cys50, and Cys54 each coordinate [4Fe-4S] cluster.

The cofactor is [4Fe-4S] cluster.

In terms of biological role, ferredoxins are iron-sulfur proteins that transfer electrons in a wide variety of metabolic reactions. The polypeptide is Ferredoxin (fdx) (Allochromatium vinosum (strain ATCC 17899 / DSM 180 / NBRC 103801 / NCIMB 10441 / D) (Chromatium vinosum)).